Reading from the N-terminus, the 172-residue chain is Disulfide bond formation protein B (172 aa).

The Cytoplasmic segment spans residues 1-11 (MNPFRWSFRAQ). Residues 12–28 (FLLGFLACAGLLAYAIY) traverse the membrane as a helical segment. Over 29-46 (VQLHLGLEPCPLCIFQRI) the chain is Periplasmic. Cys-38 and Cys-41 are joined by a disulfide. The chain crosses the membrane as a helical span at residues 47-63 (AFAALAVFFLLGALHGP). Topologically, residues 64 to 70 (RAAAGRK) are cytoplasmic. A helical transmembrane segment spans residues 71 to 88 (VYGVLSFIAAGVGMGIAA). Residues 89–145 (RHVWVQIRPKDMMSSCGPPLSFLSETMGPFEVFRTVLTGTGDCGNIDWRFLGLSMPM) are Periplasmic-facing. Cys-104 and Cys-131 are oxidised to a cystine. The helical transmembrane segment at 146 to 164 (WSMVWFVGLALWALYAGFK) threads the bilayer. At 165–172 (VRRSSVHH) the chain is on the cytoplasmic side.

Belongs to the DsbB family.

The protein resides in the cell inner membrane. Functionally, required for disulfide bond formation in some periplasmic proteins. Acts by oxidizing the DsbA protein. In Xanthomonas axonopodis pv. citri (strain 306), this protein is Disulfide bond formation protein B.